We begin with the raw amino-acid sequence, 392 residues long: Xylose operon regulatory protein (392 aa).

In terms of domain architecture, HTH araC/xylS-type spans 288-386 (IQAMHYIRNH…DTTPKEYRDV (99 aa)). DNA-binding regions (H-T-H motif) lie at residues 305–326 (DQVLDAVGISRSNLEKRFKEEV) and 353–376 (INEISQMCGYPSLQYFYSVFKKAY).

In terms of biological role, regulatory protein for the xylBAFGHR operon. This is Xylose operon regulatory protein (xylR) from Escherichia coli O157:H7.